The primary structure comprises 287 residues: 1-acyl-sn-glycerol-3-phosphate acyltransferase alpha (287 aa).

The first 26 residues, 1–26, serve as a signal peptide directing secretion; that stretch reads MELWPGAGTLLLLLFLLLLLLLPTLW. The Lumenal segment spans residues 27–37; that stretch reads FCSPSAKYFFK. Residues 38-58 traverse the membrane as a helical segment; that stretch reads MAFYNGWILFLAVLAIPVCAV. Topologically, residues 59-127 are cytoplasmic; sequence RGRNVENMKI…PGHCVPIAKR (69 aa). The HXXXXD motif motif lies at 104–109; that stretch reads HQSSLD. The chain crosses the membrane as a helical span at residues 128-148; that stretch reads ELLWAGSAGLACWLAGVIFID. Over 149 to 192 the chain is Lumenal; sequence RKRTGDAISVMSEVAQTLLTQDVRVWVFPEGTRNHNGSMLPFKR. Residues 178–181 carry the EGTR motif motif; the sequence is EGTR.

It belongs to the 1-acyl-sn-glycerol-3-phosphate acyltransferase family.

It localises to the endoplasmic reticulum membrane. It catalyses the reaction a 1-acyl-sn-glycero-3-phosphate + an acyl-CoA = a 1,2-diacyl-sn-glycero-3-phosphate + CoA. The catalysed reaction is 1-(9Z-octadecenoyl)-sn-glycero-3-phosphate + (9Z)-octadecenoyl-CoA = 1,2-di-(9Z-octadecenoyl)-sn-glycero-3-phosphate + CoA. The enzyme catalyses 1-(9Z-octadecenoyl)-sn-glycero-3-phosphate + hexadecanoyl-CoA = 1-(9Z)-octadecenoyl-2-hexadecanoyl-sn-glycero-3-phosphate + CoA. It carries out the reaction heptadecanoyl-CoA + 1-(9Z-octadecenoyl)-sn-glycero-3-phosphate = 1-(9Z)-octadecenoyl-2-heptadecanoyl-sn-glycero-3-phosphate + CoA. It catalyses the reaction 1-(9Z-octadecenoyl)-sn-glycero-3-phosphate + octadecanoyl-CoA = 1-(9Z-octadecenoyl)-2-octadecanoyl-sn-glycero-3-phosphate + CoA. The catalysed reaction is 1-(9Z-octadecenoyl)-sn-glycero-3-phosphate + (9Z,12Z)-octadecadienoyl-CoA = 1-(9Z)-octadecenoyl-2-(9Z,12Z)-octadecadienoyl-sn-glycero-3-phosphate + CoA. The enzyme catalyses 1-(9Z-octadecenoyl)-sn-glycero-3-phosphate + tetradecanoyl-CoA = 1-(9Z)-octadecenoyl-2-tetradecanoyl-sn-glycero-3-phosphate + CoA. It carries out the reaction pentadecanoyl-CoA + 1-(9Z-octadecenoyl)-sn-glycero-3-phosphate = 1-(9Z)-octadecenoyl-2-pentadecanoyl-sn-glycero-3-phosphate + CoA. It catalyses the reaction 1-hexadecanoyl-sn-glycero-3-phosphate + (9Z)-octadecenoyl-CoA = 1-hexadecanoyl-2-(9Z-octadecenoyl)-sn-glycero-3-phosphate + CoA. The catalysed reaction is 1-(9Z,12Z,15Z)-octadecatrienoyl-sn-glycero-3-phosphate + (9Z)-octadecenoyl-CoA = 1-(9Z,12Z,15Z)-octadecatrienoyl-2-(9Z)-octadecenoyl-sn-glycero-3-phosphate + CoA. The enzyme catalyses 1-(6Z,9Z,12Z-octadecatrienoyl)-sn-glycero-3-phosphate + (9Z)-octadecenoyl-CoA = (6Z,9Z,12Z)-octadecatrienoyl-2-(9Z)-octadecenoyl-sn-glycero-3-phosphate + CoA. It carries out the reaction 1-eicosanoyl-sn-glycero-3-phosphate + (9Z)-octadecenoyl-CoA = 1-eicosanoyl-2-(9Z)-octadecenoyl-sn-glycero-3-phosphate + CoA. It catalyses the reaction 1-tetradecanoyl-sn-glycerol 3-phosphate + (9Z)-octadecenoyl-CoA = 1-tetradecanoyl-2-(9Z)-octadecenoyl-sn-glycero-3-phosphate + CoA. The catalysed reaction is 1-(9Z-octadecenoyl)-sn-glycero-3-phosphate + (5Z,8Z,11Z,14Z)-eicosatetraenoyl-CoA = 1-(9Z)-octadecenoyl-2-(5Z,8Z,11Z,14Z)-eicosatetraenoyl-sn-glycero-3-phosphate + CoA. The enzyme catalyses 1-(9Z-octadecenoyl)-sn-glycero-3-phosphate + dodecanoyl-CoA = 1-(9Z)-octadecenoyl-2-dodecanoyl-sn-glycero-3-phosphate + CoA. It carries out the reaction (6Z)-octadecenoyl-CoA + 1-(9Z-octadecenoyl)-sn-glycero-3-phosphate = 1-(9Z)-octadecenoyl-2-(6Z)-octadecenoyl-sn-glycero-3-phosphate + CoA. It catalyses the reaction (11Z)-octadecenoyl-CoA + 1-(9Z-octadecenoyl)-sn-glycero-3-phosphate = 1-(9Z)-octadecenoyl-2-(11Z)-octadecenoyl-sn-glycero-3-phosphate + CoA. The catalysed reaction is (9Z)-hexadecenoyl-CoA + 1-(9Z-octadecenoyl)-sn-glycero-3-phosphate = 1-(9Z-octadecenoyl)-2-(9Z-hexadecenoyl)-sn-glycero-3-phosphate + CoA. It participates in phospholipid metabolism; CDP-diacylglycerol biosynthesis; CDP-diacylglycerol from sn-glycerol 3-phosphate: step 2/3. Functionally, converts 1-acyl-sn-glycerol-3-phosphate (lysophosphatidic acid or LPA) into 1,2-diacyl-sn-glycerol-3-phosphate (phosphatidic acid or PA) by incorporating an acyl moiety at the sn-2 position of the glycerol backbone. The chain is 1-acyl-sn-glycerol-3-phosphate acyltransferase alpha (AGPAT1) from Ovis aries (Sheep).